Reading from the N-terminus, the 250-residue chain is Zinc finger protein lsy-27 (250 aa).

2 C2H2-type zinc fingers span residues 25–48 and 52–75; these read FVCSSCSQNFQHSASLNRHRQLMH and HTCMMCERALNQKETIREHMRNEH. The C2H2-type 3; degenerate zinc-finger motif lies at 81–104; it reads FTCGCCNWTFASKRQLTEHTKCIQ. 2 disordered regions span residues 126–177 and 226–250; these read IQST…EAER and QKVKAEGPAVESKMIPEKHVKQEIE. A compositionally biased stretch (low complexity) spans 148–165; it reads SLSPSSSVSTSISSRDAS. A compositionally biased stretch (basic and acidic residues) spans 239 to 250; that stretch reads MIPEKHVKQEIE.

Functionally, involved in regulating left/right asymmetric differentiation of the gustatory ASE neurons. Plays a role in modulating expression of LIM/homeobox protein lim-6. This is Zinc finger protein lsy-27 from Caenorhabditis elegans.